Consider the following 1741-residue polypeptide: S-layer protein (1741 aa).

The span at 894–904 (SFTSDSANGSG) shows a compositional bias: polar residues. The disordered stretch occupies residues 894-913 (SFTSDSANGSGHSVEGGTGD).

Glycosylated.

The protein localises to the secreted. The protein resides in the cell wall. It is found in the S-layer. In terms of biological role, S-layer protein. The S-layer is a paracrystalline mono-layered assembly of proteins which coats the surface of bacteria. Under laboratory conditions, has a supportive but not a critical role in the function of the cyanobacterium. Shows no apparent hemolytic activity against sheep erythrocytes, however, a slight hemolytic activity is detected during the conformational change caused by the rebinding of Ca(2+). In Synechocystis sp. (strain ATCC 27184 / PCC 6803 / Kazusa), this protein is S-layer protein.